Reading from the N-terminus, the 563-residue chain is Dicarboxylate transporter 2.1, chloroplastic (563 aa).

A chloroplast-targeting transit peptide spans 1 to 68 (MESFALHSLS…LKPIPRFSTR (68 aa)). 2 disordered regions span residues 16–45 (TLLS…STIS) and 71–92 (AAPQ…PSPQ). Low complexity predominate over residues 28–45 (RLSLLRRTSSRSPPSTIS). The segment covering 76 to 90 (NAPPPPPPSPSPSPS) has biased composition (pro residues). Transmembrane regions (helical) follow at residues 96 to 116 (LIPL…VPVP), 134 to 154 (IAGL…GLTA), 165 to 185 (AAFS…FFFA), 234 to 254 (AGGI…SKPN), 261 to 281 (LGSY…ALFL), 308 to 328 (WFKA…LILY), 358 to 378 (NEWI…CGET), 379 to 399 (LGIP…VLGV), 414 to 434 (TLAW…LGVV), 450 to 470 (LSWP…HYLF), 483 to 503 (AFLA…LALA), and 537 to 557 (IGFV…TFWW).

This sequence belongs to the SLC13A/DASS transporter (TC 2.A.47) family. DIT1 subfamily. As to expression, expressed in roots, rosette and cauline leaves, stems, flowers and siliques.

The protein localises to the plastid. It localises to the chloroplast inner membrane. In terms of biological role, glutamate/malate translocator involved with DIT1 in primary ammonia assimilation and in the re-assimilation of ammonia generated by the photorespiratory pathway. Exports the end product of ammonia assimilation, glutamate, from plastids to the cytosol. The precursor for ammonia assimilation, 2-oxoglutarate, is imported from the cytosol by DIT1. The chain is Dicarboxylate transporter 2.1, chloroplastic (DIT2-1) from Arabidopsis thaliana (Mouse-ear cress).